A 441-amino-acid polypeptide reads, in one-letter code: Probable dihydroorotase-like protein (441 aa).

Residues 121–140 (VNAHHQPPGDPQAENRPDSA) form a disordered region.

The protein belongs to the metallo-dependent hydrolases superfamily. DHOase family. PyrC' subfamily.

Its function is as follows. Non-functional DHOase. The polypeptide is Probable dihydroorotase-like protein (pyrC') (Synechocystis sp. (strain ATCC 27184 / PCC 6803 / Kazusa)).